The chain runs to 126 residues: Anti-adapter protein IraD (126 aa).

This sequence belongs to the GpW/Gp25 family. IraD subfamily. Interacts with RssB.

It localises to the cytoplasm. Functionally, inhibits RpoS proteolysis by regulating RssB activity, thereby increasing the stability of the sigma stress factor RpoS during oxidative stress. Its effect on RpoS stability is due to its interaction with RssB, which probably blocks the interaction of RssB with RpoS, and the consequent delivery of the RssB-RpoS complex to the ClpXP protein degradation pathway. The protein is Anti-adapter protein IraD of Salmonella arizonae (strain ATCC BAA-731 / CDC346-86 / RSK2980).